Reading from the N-terminus, the 293-residue chain is tRNA pseudouridine synthase B (293 aa).

The active-site Nucleophile is the Asp-39.

Belongs to the pseudouridine synthase TruB family. Type 1 subfamily.

It carries out the reaction uridine(55) in tRNA = pseudouridine(55) in tRNA. Responsible for synthesis of pseudouridine from uracil-55 in the psi GC loop of transfer RNAs. This chain is tRNA pseudouridine synthase B, found in Streptococcus thermophilus (strain CNRZ 1066).